The primary structure comprises 348 residues: 3-isopropylmalate dehydrogenase (348 aa).

Residue 76-87 (GPKWTDPNNRPE) coordinates NAD(+). Arg94, Arg104, Arg132, and Asp217 together coordinate substrate. Mg(2+)-binding residues include Asp217, Asp241, and Asp245. 275 to 287 (GSAPDIAGKNVAN) serves as a coordination point for NAD(+).

It belongs to the isocitrate and isopropylmalate dehydrogenases family. LeuB type 1 subfamily. Homodimer. Mg(2+) is required as a cofactor. Requires Mn(2+) as cofactor.

The protein localises to the cytoplasm. The catalysed reaction is (2R,3S)-3-isopropylmalate + NAD(+) = 4-methyl-2-oxopentanoate + CO2 + NADH. Its pathway is amino-acid biosynthesis; L-leucine biosynthesis; L-leucine from 3-methyl-2-oxobutanoate: step 3/4. Catalyzes the oxidation of 3-carboxy-2-hydroxy-4-methylpentanoate (3-isopropylmalate) to 3-carboxy-4-methyl-2-oxopentanoate. The product decarboxylates to 4-methyl-2 oxopentanoate. The sequence is that of 3-isopropylmalate dehydrogenase from Staphylococcus aureus (strain MW2).